Reading from the N-terminus, the 334-residue chain is Uroporphyrinogen decarboxylase (334 aa).

Residues 22-26 (RQVGR), aspartate 71, tyrosine 140, serine 195, and histidine 310 contribute to the substrate site.

This sequence belongs to the uroporphyrinogen decarboxylase family. Homodimer.

It is found in the cytoplasm. It carries out the reaction uroporphyrinogen III + 4 H(+) = coproporphyrinogen III + 4 CO2. It participates in porphyrin-containing compound metabolism; protoporphyrin-IX biosynthesis; coproporphyrinogen-III from 5-aminolevulinate: step 4/4. Functionally, catalyzes the decarboxylation of four acetate groups of uroporphyrinogen-III to yield coproporphyrinogen-III. The polypeptide is Uroporphyrinogen decarboxylase (Chlamydia muridarum (strain MoPn / Nigg)).